An 885-amino-acid chain; its full sequence is Dual serine/threonine and tyrosine protein kinase (885 aa).

The Protein kinase domain maps to 614–868 (PKLGRELGRG…PLLGIVQPGL (255 aa)). ATP is bound by residues 620–628 (LGRGQYGVV) and Lys643. The active-site Proton acceptor is Asp739.

Belongs to the protein kinase superfamily. Ser/Thr protein kinase family.

The protein localises to the cytoplasm. It is found in the cell membrane. It localises to the apical cell membrane. Its subcellular location is the basolateral cell membrane. The protein resides in the cell junction. The catalysed reaction is L-seryl-[protein] + ATP = O-phospho-L-seryl-[protein] + ADP + H(+). It catalyses the reaction L-threonyl-[protein] + ATP = O-phospho-L-threonyl-[protein] + ADP + H(+). It carries out the reaction L-tyrosyl-[protein] + ATP = O-phospho-L-tyrosyl-[protein] + ADP + H(+). Its function is as follows. May act as a positive regulator of ERK phosphorylation downstream of fibroblast growth factor-receptor activation. May induce both caspase-dependent apoptosis and caspase-independent cell death. Plays a role in the embryonic development. The polypeptide is Dual serine/threonine and tyrosine protein kinase (dstyk) (Danio rerio (Zebrafish)).